A 430-amino-acid chain; its full sequence is Terminal nucleotidyltransferase 5B (430 aa).

Residues 1–46 (MMPSESETESRDRAAAQVGTAAAAAVAKAAPAGGGPDPEASSASLG) are disordered. Residues 15–44 (AAQVGTAAAAAVAKAAPAGGGPDPEASSAS) show a composition bias toward low complexity.

Belongs to the TENT family.

The protein localises to the cytoplasm. Its subcellular location is the nucleus. It catalyses the reaction RNA(n) + ATP = RNA(n)-3'-adenine ribonucleotide + diphosphate. In terms of biological role, catalyzes the transfer of one adenosine molecule from an ATP to an mRNA poly(A) tail bearing a 3'-OH terminal group in an ATP hydrolysis-dependent manner. May be involved in maintaining the translation efficiency of at least some genes through preventing degradation of their mRNAs. Prefers RNA molecules that are adenosine-rich close to 3'-end. In addition, may inhibit cell proliferation and cell cycle progression through ubiquitination of beta-catenin/CTNNB1. The sequence is that of Terminal nucleotidyltransferase 5B from Bos taurus (Bovine).